The chain runs to 147 residues: CLAVATA3/ESR (CLE)-related protein 4C (147 aa).

The N-terminal stretch at 1–21 (MATNTMLCLFVISVVLALAFA) is a signal peptide. The interval 21–83 (ATNKKGDEEP…SNQLPNNNWM (63 aa)) is required for secretion from the host cytoplasm to the host apoplasm. A glycan (N-linked (GlcNAc...) asparagine) is linked at Asn32. 2 disordered regions span residues 57-86 (GADA…MAPP) and 116-147 (RKTG…PIHH). Over residues 125–137 (HHEETTLEQEKRV) the composition is skewed to basic and acidic residues. The CLE motif lies at 136–147 (RVAGAGPDPIHH).

It belongs to the CLV3/ESR signal peptide family. Highly expressed exclusively within the dorsal esophageal gland cell during syncytium formation in host plants.

It is found in the secreted. Its subcellular location is the host cytoplasm. The protein localises to the host extracellular space. The protein resides in the extracellular space. It localises to the apoplast. In terms of biological role, mimics host plant CLE extracellular signal peptides that regulate cell fate. May play a role in the differentiation or division of feeding cells (syncytia) induced in plant roots during infection. This is CLAVATA3/ESR (CLE)-related protein 4C (CLE-4C) from Globodera rostochiensis (Golden nematode worm).